The chain runs to 454 residues: UDP-glycosyltransferase 79A2 (454 aa).

Residues Ser269, 330 to 331 (WV), 348 to 356 (HAGYGSVIE), and 370 to 373 (KVDQ) each bind UDP-alpha-D-glucose.

The protein belongs to the UDP-glycosyltransferase family.

Its function is as follows. May glycosylate diterpenes or flavonols in leaves. The chain is UDP-glycosyltransferase 79A2 from Stevia rebaudiana (Stevia).